A 443-amino-acid polypeptide reads, in one-letter code: KASVGFKAGVKDYRLTYYTPEYQTKDTDILAAFRVTPQPGVPPEEAGAAVAAESSTGTWTTVWTDGLTSLDRYKGRCYDIEPVAGEESQFIAYVAYPLDLFEEGSVTNLFTSIVGNVFGFKALRALRLEDLRIPPAYSKTFQGPPHGIQVERDKLNKYGRPLLGCTIKPKLGLSAKNYGRAVYECLRGGLDFTKDDENVNSQPFMRWRDRFVFCAEAINKAQAETGEIKGHYLNATAGTCEEMMKRAIFARELGVPIVMHDYLTGGFTANTSLAHYCRDNGLLLHIHRAMHAVIDRQRNHGMHFRVLAKALRMSGGDHVHAGTVVGKLEGERDVTLGFVDLLRDDFIEKDRSRGIYFTQDWVSMPGVLPVASGGIHVWHMPALTEIFGDDSVLQFGGGTLGHPWGNAPGAVTNRVAVEACVQARNEGRDLAREGNEVIREACK.

Lys7 is subject to N6,N6,N6-trimethyllysine. Residues Asn116 and Thr166 each contribute to the substrate site. Lys168 (proton acceptor) is an active-site residue. Substrate is bound at residue Lys170. Positions 194, 196, and 197 each coordinate Mg(2+). Lys194 is subject to N6-carboxylysine. His287 serves as the catalytic Proton acceptor. Residues Arg288, His320, and Ser372 each contribute to the substrate site.

This sequence belongs to the RuBisCO large chain family. Type I subfamily. Heterohexadecamer of 8 large chains and 8 small chains; disulfide-linked. The disulfide link is formed within the large subunit homodimers. Requires Mg(2+) as cofactor. In terms of processing, the disulfide bond which can form in the large chain dimeric partners within the hexadecamer appears to be associated with oxidative stress and protein turnover.

The protein localises to the plastid. The protein resides in the chloroplast. It catalyses the reaction 2 (2R)-3-phosphoglycerate + 2 H(+) = D-ribulose 1,5-bisphosphate + CO2 + H2O. The enzyme catalyses D-ribulose 1,5-bisphosphate + O2 = 2-phosphoglycolate + (2R)-3-phosphoglycerate + 2 H(+). Functionally, ruBisCO catalyzes two reactions: the carboxylation of D-ribulose 1,5-bisphosphate, the primary event in carbon dioxide fixation, as well as the oxidative fragmentation of the pentose substrate in the photorespiration process. Both reactions occur simultaneously and in competition at the same active site. The protein is Ribulose bisphosphate carboxylase large chain of Abies homolepis (Nikko fir).